Here is a 274-residue protein sequence, read N- to C-terminus: Undecaprenyl-diphosphatase (274 aa).

The next 7 membrane-spanning stretches (helical) occupy residues 21–39 (FLPI…LLGF), 44–64 (AQVF…LVYW), 85–105 (FNLA…GKAI), 109–129 (LFTP…ILWA), 185–205 (ATDF…VYSL), 214–234 (VADL…AWLC), and 247–267 (FVPF…TAST).

The protein belongs to the UppP family.

It is found in the cell inner membrane. It carries out the reaction di-trans,octa-cis-undecaprenyl diphosphate + H2O = di-trans,octa-cis-undecaprenyl phosphate + phosphate + H(+). In terms of biological role, catalyzes the dephosphorylation of undecaprenyl diphosphate (UPP). Confers resistance to bacitracin. In Verminephrobacter eiseniae (strain EF01-2), this protein is Undecaprenyl-diphosphatase.